The sequence spans 181 residues: Caltractin ICL1d (181 aa).

Residues 1 to 29 (MARRGQQPPPQQAPPAQKNQTGKFNPAEF) are disordered. 4 EF-hand domains span residues 37–72 (EEVL…LGFE), 73–108 (AKNQ…RISE), 110–145 (DSKA…LGET), and 146–181 (MDDS…KTFA). 10 residues coordinate Ca(2+): D50, D52, T54, S56, E61, D86, D88, S90, Q92, and E97.

This sequence belongs to the centrin family. Monomer.

Its subcellular location is the cytoplasm. The protein localises to the cytoskeleton. Its function is as follows. Plays a fundamental role in microtubule organizing center structure and function. Component of the infraciliary lattice (ICL) and the ciliary basal bodies. This is Caltractin ICL1d (Icl1d) from Paramecium tetraurelia.